A 610-amino-acid polypeptide reads, in one-letter code: UvrABC system protein C (610 aa).

The region spanning 16 to 94 is the GIY-YIG domain; that stretch reads SQPGVYRMYD…IQRYQPRYNV (79 aa). In terms of domain architecture, UVR spans 204-239; that stretch reads SQVIEGLIKRMEEASQALRFEEAARIRDQIHAVRQV.

Belongs to the UvrC family. Interacts with UvrB in an incision complex.

The protein resides in the cytoplasm. Functionally, the UvrABC repair system catalyzes the recognition and processing of DNA lesions. UvrC both incises the 5' and 3' sides of the lesion. The N-terminal half is responsible for the 3' incision and the C-terminal half is responsible for the 5' incision. This Proteus mirabilis (strain HI4320) protein is UvrABC system protein C.